We begin with the raw amino-acid sequence, 171 residues long: 16S rRNA aminocarboxypropyltransferase (171 aa).

Residues T17, L67, L90, and T109 each contribute to the S-adenosyl-L-methionine site.

The protein belongs to the TDD superfamily. TSR3 family.

Its subcellular location is the cytoplasm. It carries out the reaction an N(1)-methylpseudouridine in rRNA + S-adenosyl-L-methionine = N(1)-methyl-N(3)-[(3S)-3-amino-3-carboxypropyl]pseudouridine in rRNA + S-methyl-5'-thioadenosine + H(+). Its function is as follows. Aminocarboxypropyltransferase that catalyzes the aminocarboxypropyl transfer on pseudouridine corresponding to position 914 in M.jannaschii 16S rRNA. It constitutes the last step in biosynthesis of the hypermodified N1-methyl-N3-(3-amino-3-carboxypropyl) pseudouridine (m1acp3-Psi). The chain is 16S rRNA aminocarboxypropyltransferase from Methanobrevibacter smithii (strain ATCC 35061 / DSM 861 / OCM 144 / PS).